The primary structure comprises 353 residues: Peptide chain release factor 1 (353 aa).

An N5-methylglutamine modification is found at glutamine 230.

Belongs to the prokaryotic/mitochondrial release factor family. In terms of processing, methylated by PrmC. Methylation increases the termination efficiency of RF1.

It localises to the cytoplasm. Functionally, peptide chain release factor 1 directs the termination of translation in response to the peptide chain termination codons UAG and UAA. This is Peptide chain release factor 1 from Gluconobacter oxydans (strain 621H) (Gluconobacter suboxydans).